A 463-amino-acid polypeptide reads, in one-letter code: ATP synthase subunit beta (463 aa).

Residue 152–159 coordinates ATP; sequence GGAGVGKT.

The protein belongs to the ATPase alpha/beta chains family. F-type ATPases have 2 components, CF(1) - the catalytic core - and CF(0) - the membrane proton channel. CF(1) has five subunits: alpha(3), beta(3), gamma(1), delta(1), epsilon(1). CF(0) has three main subunits: a(1), b(2) and c(9-12). The alpha and beta chains form an alternating ring which encloses part of the gamma chain. CF(1) is attached to CF(0) by a central stalk formed by the gamma and epsilon chains, while a peripheral stalk is formed by the delta and b chains.

It localises to the cell inner membrane. It carries out the reaction ATP + H2O + 4 H(+)(in) = ADP + phosphate + 5 H(+)(out). Functionally, produces ATP from ADP in the presence of a proton gradient across the membrane. The catalytic sites are hosted primarily by the beta subunits. This is ATP synthase subunit beta from Shewanella sp. (strain ANA-3).